The following is a 105-amino-acid chain: UPF0148 protein PH0795 (105 aa).

Belongs to the UPF0148 family.

In Pyrococcus horikoshii (strain ATCC 700860 / DSM 12428 / JCM 9974 / NBRC 100139 / OT-3), this protein is UPF0148 protein PH0795.